The primary structure comprises 228 residues: L-ribulose-5-phosphate 4-epimerase UlaF (228 aa).

Residues 26–27, 43–44, and 72–73 each bind substrate; these read GN, SG, and SS. Zn(2+)-binding residues include D74, H93, and H95. D118 (proton donor/acceptor) is an active-site residue. Zn(2+) is bound at residue H167. Residue Y225 is the Proton donor/acceptor of the active site.

Belongs to the aldolase class II family. AraD/FucA subfamily. Requires Zn(2+) as cofactor.

It carries out the reaction L-ribulose 5-phosphate = D-xylulose 5-phosphate. It participates in cofactor degradation; L-ascorbate degradation; D-xylulose 5-phosphate from L-ascorbate: step 4/4. Functionally, catalyzes the isomerization of L-ribulose 5-phosphate to D-xylulose 5-phosphate. Is involved in the anaerobic L-ascorbate utilization. The sequence is that of L-ribulose-5-phosphate 4-epimerase UlaF from Escherichia coli (strain SE11).